Consider the following 365-residue polypeptide: Flagellar P-ring protein (365 aa).

Positions 1 to 19 (MFKALAGIVLALVATLAHA) are cleaved as a signal peptide.

This sequence belongs to the FlgI family. As to quaternary structure, the basal body constitutes a major portion of the flagellar organelle and consists of four rings (L,P,S, and M) mounted on a central rod.

The protein localises to the periplasm. Its subcellular location is the bacterial flagellum basal body. Assembles around the rod to form the L-ring and probably protects the motor/basal body from shearing forces during rotation. This chain is Flagellar P-ring protein, found in Salmonella heidelberg (strain SL476).